An 838-amino-acid polypeptide reads, in one-letter code: Sec1 family domain-containing protein MIP3 (838 aa).

The tract at residues 637–677 is disordered; the sequence is KSEETKEIPSDDQLDIDALDDDPWGKWGDEEEEEVDNSKAD. Residues 646 to 658 are compositionally biased toward acidic residues; that stretch reads SDDQLDIDALDDD.

Belongs to the STXBP/unc-18/SEC1 family. In terms of assembly, forms a complex with MAG2, ZW10/MIP1 and MIP2 on the endoplasmic reticulum.

The protein resides in the endoplasmic reticulum membrane. Its function is as follows. Required for proper maturation of seed storage proteins. Forms a complex with MAG2, ZW10/MIP1 and MIP2 on the endoplasmic reticulum that may be responsible for efficient transport of seed storage proteins. The polypeptide is Sec1 family domain-containing protein MIP3 (Arabidopsis thaliana (Mouse-ear cress)).